The primary structure comprises 612 residues: Protein MUK1 (612 aa).

Over residues 40–50 the composition is skewed to basic and acidic residues; that stretch reads EDQNDNERSSC. The tract at residues 40–66 is disordered; that stretch reads EDQNDNERSSCDGDENSTTGERLENNK. Residues 55 to 66 show a composition bias toward polar residues; sequence NSTTGERLENNK. Residues Ser-67, Ser-163, Ser-185, and Ser-245 each carry the phosphoserine modification. The VPS9 domain occupies 273 to 414; that stretch reads TEYNKLLNEK…VEGLTKNDFS (142 aa). The tract at residues 494 to 560 is disordered; the sequence is IRSYTPPHPN…SSASLEHGNR (67 aa). The span at 503–517 shows a compositional bias: low complexity; that stretch reads NNTSNNNLHSSNNLN. The segment covering 518-529 has biased composition (polar residues); sequence IPRSSSQLSMEL. The segment covering 530-542 has biased composition (basic and acidic residues); the sequence is SNRDTTEMSRDGS. Residues 543 to 554 show a composition bias toward low complexity; that stretch reads RSTSSSSRSSAS.

The protein resides in the cytoplasm. Putative GTPase-activating protein. The chain is Protein MUK1 (MUK1) from Saccharomyces cerevisiae (strain ATCC 204508 / S288c) (Baker's yeast).